Consider the following 660-residue polypeptide: Leucine-rich repeat transmembrane protein FLRT2 (660 aa).

A signal peptide spans 1-35; the sequence is MGLQTAKWPSHGTFVLKFWLIMSLGLYSHVSKLLA. 2 disulfides stabilise this stretch: Cys36–Cys42 and Cys40–Cys49. The LRRNT domain occupies 36–67; sequence CPSVCRCDRNFVYCNERSLTSVPLGIPEGVTV. Topologically, residues 36–540 are extracellular; the sequence is CPSVCRCDRN…QTTSHTMGSP (505 aa). LRR repeat units lie at residues 62–87, 88–108, 109–131, 132–157, 159–181, 183–202, 203–228, 229–251, 252–274, and 275–298; these read PEGV…LHNV, QSVH…MNLP, KNVR…ALAQ, LLKL…AFRE, ISLK…LPVD, QELR…AFQN, LTSL…TFSH, LTKL…DLPG, THLI…AFAN, and LRKL…VFDH. Residue Asn202 is glycosylated (N-linked (GlcNAc...) asparagine). Intrachain disulfides connect Cys314–Cys339 and Cys316–Cys360. The region spanning 338–361 is the LRRCT domain; that stretch reads MCQGPEQVRGMAVRELNMNLLSCP. Over residues 372 to 396 the composition is skewed to low complexity; sequence PAPSTVSPTTQSPTVSVPSPSRGSV. Residues 372 to 413 form a disordered region; the sequence is PAPSTVSPTTQSPTVSVPSPSRGSVPPAPAPSKLPTIPDWDG. Residues 419–517 form the Fibronectin type-III domain; it reads PPISERIQLS…ICSEATTHAS (99 aa). Residues 541–561 form a helical membrane-spanning segment; the sequence is FLLAGLIGGAVIFVLVVLLSV. The Cytoplasmic portion of the chain corresponds to 562 to 660; sequence FCWHMHKKGR…SVPDLEHCHT (99 aa).

In terms of assembly, self-associates (via leucine-rich repeats), giving rise to homooligomers. Interacts with FGFR1. Interacts with FGFR2. Interacts (via extracellular domain) with ADGRL1/LPHN1. Interacts (via extracellular domain) with ADGRL3 (via olfactomedin-like domain). Interacts (via extracellular domain) with UNC5D (via the first Ig-like domain). Can also interact (via extracellular domain) with UNC5B, but with much lower affinity. Interacts (via extracellular domain) with FN1. In terms of processing, N-glycosylated. Post-translationally, proteolytic cleavage in the juxtamembrane region gives rise to a soluble ectodomain. Cleavage is probably effected by a metalloprotease. Detected in brain (at protein level).

The protein localises to the cell membrane. It is found in the endoplasmic reticulum membrane. It localises to the synapse. The protein resides in the synaptosome. Its subcellular location is the cell junction. The protein localises to the focal adhesion. It is found in the secreted. It localises to the extracellular space. The protein resides in the extracellular matrix. Its subcellular location is the microsome membrane. Functions in cell-cell adhesion, cell migration and axon guidance. Mediates cell-cell adhesion via its interactions with ADGRL3 and probably also other latrophilins that are expressed at the surface of adjacent cells. May play a role in the migration of cortical neurons during brain development via its interaction with UNC5D. Mediates axon growth cone collapse and plays a repulsive role in neuron guidance via its interaction with UNC5D, and possibly also other UNC-5 family members. Plays a role in fibroblast growth factor-mediated signaling cascades. Required for normal organization of the cardiac basement membrane during embryogenesis, and for normal embryonic epicardium and heart morphogenesis. This Rattus norvegicus (Rat) protein is Leucine-rich repeat transmembrane protein FLRT2.